A 201-amino-acid chain; its full sequence is Protein ripply1 (201 aa).

A disordered region spans residues 1–29 (MDPAASPAAAPPAAPAAAPAADPAADPAA). Over residues 15-29 (PAAAPAADPAADPAA) the composition is skewed to low complexity. The short motif at 57–60 (AYLW) is the WRPW motif element. Residues 99-134 (HPVRLYWPKSHSFDYLYSAGEILLNNFPVQATINLY) form a ripply homology domain region. Residues 136 to 174 (DSDSADNEEDKEEEEEEEEEEDDEEEEEDEDKDVNENEP) are compositionally biased toward acidic residues. Residues 136 to 201 (DSDSADNEED…SPDPHSACPN (66 aa)) are disordered.

It belongs to the ripply family. As to expression, expressed in the anterior presomitic mesoderm and somites of stage E9.5 dpc embryos. Also expressed in tongue, diaphragm and intercostal muscles at 16.5 dpc.

The protein resides in the nucleus. Functionally, plays a role in somitogenesis. Essential for transcriptional repression of the segmental patterning genes, thus terminating the segmentation program in the presomitic mesoderm, and also required for the maintenance of rostrocaudal polarity in somites. The protein is Protein ripply1 of Mus musculus (Mouse).